A 451-amino-acid polypeptide reads, in one-letter code: Bifunctional protein GlmU (451 aa).

The segment at 1-225 (MVVVAILAAG…YQEILGINDR (225 aa)) is pyrophosphorylase. UDP-N-acetyl-alpha-D-glucosamine is bound by residues 7–10 (LAAG), Lys21, Gln72, and 77–78 (GT). Asp102 contacts Mg(2+). Residues Gly139, Glu154, Asn169, and Asn223 each coordinate UDP-N-acetyl-alpha-D-glucosamine. Asn223 contributes to the Mg(2+) binding site. The tract at residues 226 to 246 (LQLATAYEILQRRVKEQWMMA) is linker. The tract at residues 247-451 (GVTLIDPNSI…PGWRKKSGES (205 aa)) is N-acetyltransferase. UDP-N-acetyl-alpha-D-glucosamine-binding residues include Arg328 and Lys346. The active-site Proton acceptor is His358. 2 residues coordinate UDP-N-acetyl-alpha-D-glucosamine: Tyr361 and Asn372. Residues Ala375, 381 to 382 (NY), Ser400, Ala418, and Arg435 each bind acetyl-CoA.

It in the N-terminal section; belongs to the N-acetylglucosamine-1-phosphate uridyltransferase family. This sequence in the C-terminal section; belongs to the transferase hexapeptide repeat family. Homotrimer. Mg(2+) is required as a cofactor.

Its subcellular location is the cytoplasm. It catalyses the reaction alpha-D-glucosamine 1-phosphate + acetyl-CoA = N-acetyl-alpha-D-glucosamine 1-phosphate + CoA + H(+). It carries out the reaction N-acetyl-alpha-D-glucosamine 1-phosphate + UTP + H(+) = UDP-N-acetyl-alpha-D-glucosamine + diphosphate. It participates in nucleotide-sugar biosynthesis; UDP-N-acetyl-alpha-D-glucosamine biosynthesis; N-acetyl-alpha-D-glucosamine 1-phosphate from alpha-D-glucosamine 6-phosphate (route II): step 2/2. The protein operates within nucleotide-sugar biosynthesis; UDP-N-acetyl-alpha-D-glucosamine biosynthesis; UDP-N-acetyl-alpha-D-glucosamine from N-acetyl-alpha-D-glucosamine 1-phosphate: step 1/1. It functions in the pathway bacterial outer membrane biogenesis; LPS lipid A biosynthesis. In terms of biological role, catalyzes the last two sequential reactions in the de novo biosynthetic pathway for UDP-N-acetylglucosamine (UDP-GlcNAc). The C-terminal domain catalyzes the transfer of acetyl group from acetyl coenzyme A to glucosamine-1-phosphate (GlcN-1-P) to produce N-acetylglucosamine-1-phosphate (GlcNAc-1-P), which is converted into UDP-GlcNAc by the transfer of uridine 5-monophosphate (from uridine 5-triphosphate), a reaction catalyzed by the N-terminal domain. The sequence is that of Bifunctional protein GlmU from Trichormus variabilis (strain ATCC 29413 / PCC 7937) (Anabaena variabilis).